Consider the following 368-residue polypeptide: Aminomethyltransferase (368 aa).

The protein belongs to the GcvT family. As to quaternary structure, the glycine cleavage system is composed of four proteins: P, T, L and H.

It catalyses the reaction N(6)-[(R)-S(8)-aminomethyldihydrolipoyl]-L-lysyl-[protein] + (6S)-5,6,7,8-tetrahydrofolate = N(6)-[(R)-dihydrolipoyl]-L-lysyl-[protein] + (6R)-5,10-methylene-5,6,7,8-tetrahydrofolate + NH4(+). In terms of biological role, the glycine cleavage system catalyzes the degradation of glycine. The protein is Aminomethyltransferase of Thermoanaerobacter pseudethanolicus (strain ATCC 33223 / 39E) (Clostridium thermohydrosulfuricum).